A 393-amino-acid chain; its full sequence is Formate-dependent phosphoribosylglycinamide formyltransferase (393 aa).

Residues 22-23 (EL) and glutamate 82 contribute to the N(1)-(5-phospho-beta-D-ribosyl)glycinamide site. Residues arginine 114, lysine 155, 160-165 (SSGKGQ), 195-198 (ESFV), and glutamate 203 each bind ATP. Positions 119 to 308 (RLAAEELGLR…EFALHVRAVL (190 aa)) constitute an ATP-grasp domain. Positions 267 and 279 each coordinate Mg(2+). Residues aspartate 286, lysine 356, and 363 to 364 (RR) each bind N(1)-(5-phospho-beta-D-ribosyl)glycinamide.

The protein belongs to the PurK/PurT family. As to quaternary structure, homodimer.

It catalyses the reaction N(1)-(5-phospho-beta-D-ribosyl)glycinamide + formate + ATP = N(2)-formyl-N(1)-(5-phospho-beta-D-ribosyl)glycinamide + ADP + phosphate + H(+). It participates in purine metabolism; IMP biosynthesis via de novo pathway; N(2)-formyl-N(1)-(5-phospho-D-ribosyl)glycinamide from N(1)-(5-phospho-D-ribosyl)glycinamide (formate route): step 1/1. Involved in the de novo purine biosynthesis. Catalyzes the transfer of formate to 5-phospho-ribosyl-glycinamide (GAR), producing 5-phospho-ribosyl-N-formylglycinamide (FGAR). Formate is provided by PurU via hydrolysis of 10-formyl-tetrahydrofolate. The sequence is that of Formate-dependent phosphoribosylglycinamide formyltransferase from Oleidesulfovibrio alaskensis (strain ATCC BAA-1058 / DSM 17464 / G20) (Desulfovibrio alaskensis).